We begin with the raw amino-acid sequence, 217 residues long: ATP phosphoribosyltransferase (217 aa).

It belongs to the ATP phosphoribosyltransferase family. Short subfamily. In terms of assembly, heteromultimer composed of HisG and HisZ subunits.

It localises to the cytoplasm. It catalyses the reaction 1-(5-phospho-beta-D-ribosyl)-ATP + diphosphate = 5-phospho-alpha-D-ribose 1-diphosphate + ATP. It functions in the pathway amino-acid biosynthesis; L-histidine biosynthesis; L-histidine from 5-phospho-alpha-D-ribose 1-diphosphate: step 1/9. Its function is as follows. Catalyzes the condensation of ATP and 5-phosphoribose 1-diphosphate to form N'-(5'-phosphoribosyl)-ATP (PR-ATP). Has a crucial role in the pathway because the rate of histidine biosynthesis seems to be controlled primarily by regulation of HisG enzymatic activity. The chain is ATP phosphoribosyltransferase from Burkholderia orbicola (strain AU 1054).